A 208-amino-acid polypeptide reads, in one-letter code: Small ribosomal subunit protein uS4 (208 aa).

Residues 98-161 enclose the S4 RNA-binding domain; that stretch reads QRLDNLVYRM…KNNPQILRAV (64 aa).

This sequence belongs to the universal ribosomal protein uS4 family. In terms of assembly, part of the 30S ribosomal subunit. Contacts protein S5. The interaction surface between S4 and S5 is involved in control of translational fidelity.

In terms of biological role, one of the primary rRNA binding proteins, it binds directly to 16S rRNA where it nucleates assembly of the body of the 30S subunit. Its function is as follows. With S5 and S12 plays an important role in translational accuracy. The polypeptide is Small ribosomal subunit protein uS4 (Campylobacter hominis (strain ATCC BAA-381 / DSM 21671 / CCUG 45161 / LMG 19568 / NCTC 13146 / CH001A)).